Reading from the N-terminus, the 133-residue chain is Putative nickel-responsive regulator (133 aa).

Residues H74, H85, H87, and C93 each contribute to the Ni(2+) site.

It belongs to the transcriptional regulatory CopG/NikR family. The cofactor is Ni(2+).

Functionally, transcriptional regulator. This chain is Putative nickel-responsive regulator, found in Saccharolobus solfataricus (strain ATCC 35092 / DSM 1617 / JCM 11322 / P2) (Sulfolobus solfataricus).